The sequence spans 620 residues: Chaperone protein HscA homolog (620 aa).

Belongs to the heat shock protein 70 family.

In terms of biological role, chaperone involved in the maturation of iron-sulfur cluster-containing proteins. Has a low intrinsic ATPase activity which is markedly stimulated by HscB. The chain is Chaperone protein HscA homolog from Shewanella woodyi (strain ATCC 51908 / MS32).